Reading from the N-terminus, the 357-residue chain is SPbeta prophage-derived pesticidal crystal protein-like YokG (357 aa).

The protein belongs to the cry6A endotoxin family.

This is SPbeta prophage-derived pesticidal crystal protein-like YokG (yokG) from Bacillus subtilis (strain 168).